A 471-amino-acid chain; its full sequence is Thiohydroximate-O-sulfate sulfur/sulfate-lyase (nitrile-forming) NSP2 (471 aa).

The region spanning 2-144 is the Jacalin-type lectin domain; that stretch reads VQKVEARGGE…LHSLGAYISS (143 aa). Kelch repeat units lie at residues 178-226, 231-277, 281-330, 332-379, 381-435, and 446-471; these read KIFS…VRMV, SLYV…SMTA, NVYV…VVQG, VWVV…VVGK, ILVF…GWSA, and GLVM…VDSA. The active-site Proton donor is Arg238. A (Z)-N-(sulfonatooxy)alkanimidothioate contacts are provided by Arg238, Ser271, Arg293, Gly322, and Val371. Residue Arg293 is the Proton donor of the active site. 3 residues coordinate Fe(2+): Glu387, Asp391, and His395. Trp433 contacts a (Z)-N-(sulfonatooxy)alkanimidothioate.

Belongs to the jacalin lectin family. Fe(2+) serves as cofactor. Expressed only in seeds.

The enzyme catalyses a (Z)-N-(sulfonatooxy)alkanimidothioate = a nitrile + sulfur + sulfate. It carries out the reaction (Z)-phenyl-N-(sulfonatooxy)methanimidothioate = phenylacetonitrile + sulfur + sulfate. It catalyses the reaction (Z)-N-(sulfonatooxy)prop-2-enimidothioate = but-3-enenitrile + sulfur + sulfate. The catalysed reaction is (Z)-(indol-3-yl)-N-(sulfonatooxy)methanimidothioate = (indol-3-yl)acetonitrile + sulfur + sulfate. The presence of Fe(2+) supports lyase activity in a dose-dependent manner with both benzylglucosinolate and 2-propenylglucosinolate as substrates. More active at pH 7.4 than at pH 6. Specifier protein responsible for constitutive and herbivore-induced simple nitrile formation, especially in seeds. Promotes simple nitriles, but not epithionitrile or thiocyanate formation. Converts allylglucosinolate (allyl-GSL), 2-propenylglucosinolate (sinigrin), indol-3-ylmethylglucosinolate (glucobrassicin), benzylisothiocyanate and benzylglucosinolate (glucotropaeolin) to their corresponding simple nitriles in the presence of myrosinase. Catalyzes mainly the conversion of benzylisothiocyanate when benzylglucosinolate is used as the initial substrate of myrosinase. Involved in the regulation of glucosinolate content in seeds, during stratification and germination. The polypeptide is Thiohydroximate-O-sulfate sulfur/sulfate-lyase (nitrile-forming) NSP2 (Arabidopsis thaliana (Mouse-ear cress)).